The following is a 146-amino-acid chain: Cytochrome c-type biogenesis protein CcmE (146 aa).

The Cytoplasmic segment spans residues 1-8; that stretch reads MHPKRKKR. Residues 9–29 traverse the membrane as a helical; Signal-anchor for type II membrane protein segment; the sequence is LLIVLAGLAVVAVASGLILNA. At 30–146 the chain is on the periplasmic side; that stretch reads FRSNLVFFHT…IQRAGETVVQ (117 aa). Heme is bound by residues His-124 and Tyr-128.

This sequence belongs to the CcmE/CycJ family.

It is found in the cell inner membrane. Functionally, heme chaperone required for the biogenesis of c-type cytochromes. Transiently binds heme delivered by CcmC and transfers the heme to apo-cytochromes in a process facilitated by CcmF and CcmH. This is Cytochrome c-type biogenesis protein CcmE from Laribacter hongkongensis (strain HLHK9).